Here is a 504-residue protein sequence, read N- to C-terminus: Maturase K (504 aa).

It belongs to the intron maturase 2 family. MatK subfamily.

The protein localises to the plastid. The protein resides in the chloroplast. In terms of biological role, usually encoded in the trnK tRNA gene intron. Probably assists in splicing its own and other chloroplast group II introns. In Fagus japonica (Japanese beech), this protein is Maturase K.